Here is a 549-residue protein sequence, read N- to C-terminus: Glucose-6-phosphate isomerase (549 aa).

Catalysis depends on glutamate 353, which acts as the Proton donor. Active-site residues include histidine 384 and lysine 510.

This sequence belongs to the GPI family.

The protein localises to the cytoplasm. It carries out the reaction alpha-D-glucose 6-phosphate = beta-D-fructose 6-phosphate. Its pathway is carbohydrate biosynthesis; gluconeogenesis. The protein operates within carbohydrate degradation; glycolysis; D-glyceraldehyde 3-phosphate and glycerone phosphate from D-glucose: step 2/4. Functionally, catalyzes the reversible isomerization of glucose-6-phosphate to fructose-6-phosphate. The chain is Glucose-6-phosphate isomerase from Mycolicibacterium smegmatis (strain ATCC 700084 / mc(2)155) (Mycobacterium smegmatis).